Consider the following 1205-residue polypeptide: Nitric oxide synthase 3 (1205 aa).

Residues 1-73 (MGNLKSVGQE…PPDGPKFPRV (73 aa)) form a disordered region. A lipid anchor (N-myristoyl glycine) is attached at Gly2. 2 S-palmitoyl cysteine lipidation sites follow: Cys15 and Cys26. Residues 15–27 (CGLGLGLGLGLCG) show a composition bias toward gly residues. Residues 44–54 (LAPPPSPPPAP) show a composition bias toward pro residues. 2 residues coordinate Zn(2+): Cys96 and Cys101. The tract at residues 100-488 (RCLGSLVFPR…TDPWKGSASK (389 aa)) is interaction with NOSIP. (6R)-L-erythro-5,6,7,8-tetrahydrobiopterin is bound at residue Ser104. Residue Ser116 is modified to Phosphoserine; by CDK5. Cys186 is a binding site for heme b. 5 residues coordinate L-arginine: Gln249, Trp358, Tyr359, Glu363, and Asn368. Ala448, Trp449, and Phe462 together coordinate (6R)-L-erythro-5,6,7,8-tetrahydrobiopterin. Tyr477 contributes to the heme b binding site. Residues 492–512 (VTRKKTFKEVANAVKISASLM) are calmodulin-binding. A Phosphothreonine; by AMPK modification is found at Thr497. The Flavodoxin-like domain maps to 522–705 (ATILYGSETG…AFGGWAQAAF (184 aa)). Residues Ser528, Glu529, Thr530, Arg532, Ser574, and Thr575 each coordinate FMN. Residues Ser617, Ser635, and Ser640 each carry the phosphoserine modification. Residues Ser656, Cys663, Glu689, and Gln693 each coordinate FMN. An FAD-binding FR-type domain is found at 758-1004 (RKMVQATVLA…IRGAPSFRLP (247 aa)). Position 778 (Arg778) interacts with NADP(+). His800 contributes to the FAD binding site. The segment at 819 to 850 (VEDPPPPGEPVAVEQLEKGSPGGPPPSWVRDP) is disordered. The residue at position 838 (Ser838) is a Phosphoserine. Positions 940, 942, 943, 958, 960, 964, 977, 978, and 979 each coordinate FAD. Thr1018, Arg1051, Ser1080, Arg1081, Lys1087, Tyr1089, and Gln1091 together coordinate NADP(+). A Phosphothreonine modification is found at Thr1177. Ser1179 carries the phosphoserine; by AMPK modification. Ser1181 bears the Phosphoserine mark.

It belongs to the NOS family. Homodimer. Interacts with NOSIP and NOSTRIN. Interacts with HSP90AB1. Forms a complex with ASL, ASS1 and SLC7A1; the complex regulates cell-autonomous L-arginine synthesis and citrulline recycling while channeling extracellular L-arginine to nitric oxide synthesis pathway. Heme b is required as a cofactor. It depends on FAD as a cofactor. The cofactor is FMN. Requires (6R)-L-erythro-5,6,7,8-tetrahydrobiopterin as cofactor. Post-translationally, phosphorylation by AMPK at Ser-1179 in the presence of Ca(2+)-calmodulin (CaM) activates activity. In absence of Ca(2+)-calmodulin, AMPK also phosphorylates Thr-497, resulting in inhibition of activity. Phosphorylation of Ser-116 by CDK5 reduces activity.

It localises to the membrane. It is found in the caveola. Its subcellular location is the cytoplasm. The protein resides in the cytoskeleton. The protein localises to the golgi apparatus. It localises to the cell membrane. It carries out the reaction 2 L-arginine + 3 NADPH + 4 O2 + H(+) = 2 L-citrulline + 2 nitric oxide + 3 NADP(+) + 4 H2O. Stimulated by calcium/calmodulin. Inhibited by NOSIP and NOSTRIN. Functionally, produces nitric oxide (NO) which is implicated in vascular smooth muscle relaxation through a cGMP-mediated signal transduction pathway. NO mediates vascular endothelial growth factor (VEGF)-induced angiogenesis in coronary vessels and promotes blood clotting through the activation of platelets. The chain is Nitric oxide synthase 3 (NOS3) from Canis lupus familiaris (Dog).